We begin with the raw amino-acid sequence, 169 residues long: Disulfide bond formation protein B (169 aa).

The Cytoplasmic segment spans residues 1–8; sequence MRLSVRWV. A helical transmembrane segment spans residues 9–25; sequence FFLGFFLCALMLAIAGY. Residues 26-43 are Periplasmic-facing; the sequence is FQFVENLEPCPLCILSRV. Cys-35 and Cys-38 are disulfide-bonded. A helical transmembrane segment spans residues 44–60; that stretch reads AVLAIGGVFLVAALHNP. Topologically, residues 61-67 are cytoplasmic; that stretch reads KSWGIKV. Residues 68-84 form a helical membrane-spanning segment; sequence YALLGFVVTLIGIGITG. Residues 85–141 lie on the Periplasmic side of the membrane; the sequence is RHVWLQSLPADQVPACGPGLNFMLDNFPLTETLELVFRGSGECAEVQWSFLGLTIPG. A disulfide bond links Cys-100 and Cys-127. A helical transmembrane segment spans residues 142–160; it reads WTLVAFLFLGVISLWQMGR. The Cytoplasmic portion of the chain corresponds to 161–169; that stretch reads TGGGAGKLT.

This sequence belongs to the DsbB family.

It is found in the cell inner membrane. In terms of biological role, required for disulfide bond formation in some periplasmic proteins. Acts by oxidizing the DsbA protein. The protein is Disulfide bond formation protein B of Nitrosococcus oceani (strain ATCC 19707 / BCRC 17464 / JCM 30415 / NCIMB 11848 / C-107).